The chain runs to 419 residues: UDP-N-acetylglucosamine 1-carboxyvinyltransferase (419 aa).

Position 22-23 (22-23 (KN)) interacts with phosphoenolpyruvate. R95 lines the UDP-N-acetyl-alpha-D-glucosamine pocket. C119 serves as the catalytic Proton donor. C119 carries the 2-(S-cysteinyl)pyruvic acid O-phosphothioketal modification. UDP-N-acetyl-alpha-D-glucosamine-binding positions include 164-167 (KVSV), D308, and I330.

The protein belongs to the EPSP synthase family. MurA subfamily.

The protein resides in the cytoplasm. It catalyses the reaction phosphoenolpyruvate + UDP-N-acetyl-alpha-D-glucosamine = UDP-N-acetyl-3-O-(1-carboxyvinyl)-alpha-D-glucosamine + phosphate. Its pathway is cell wall biogenesis; peptidoglycan biosynthesis. Functionally, cell wall formation. Adds enolpyruvyl to UDP-N-acetylglucosamine. In Rickettsia felis (strain ATCC VR-1525 / URRWXCal2) (Rickettsia azadi), this protein is UDP-N-acetylglucosamine 1-carboxyvinyltransferase.